We begin with the raw amino-acid sequence, 447 residues long: GTPase Der (447 aa).

EngA-type G domains follow at residues 4–165 and 180–357; these read QIIT…PEEE and LQIV…KIWN. Residues 10–17, 57–61, 119–122, 186–193, 233–237, and 298–301 each bind GTP; these read GRPNVGKS, DTPGL, NKCE, GRPNAGKS, DTAGL, and NKWD. The 86-residue stretch at 358-443 folds into the KH-like domain; it reads KKITTSKLNE…PIRFTYVKTK (86 aa).

The protein belongs to the TRAFAC class TrmE-Era-EngA-EngB-Septin-like GTPase superfamily. EngA (Der) GTPase family. In terms of assembly, associates with the 50S ribosomal subunit.

Functionally, GTPase that plays an essential role in the late steps of ribosome biogenesis. The sequence is that of GTPase Der from Rickettsia rickettsii (strain Sheila Smith).